The sequence spans 3681 residues: E3 ubiquitin-protein ligase UPL1 (3681 aa).

Basic and acidic residues predominate over residues Asp882–Ser891. The disordered stretch occupies residues Asp882–Asn912. The span at Asp892 to Thr901 shows a compositional bias: low complexity. One can recognise a UBA domain in the interval Gln1269–Asn1310. Residues Gln1316–Thr1335 form the UIM domain. Disordered regions lie at residues Ser1332 to Pro1358, Met1768 to Ile1802, Glu2015 to Glu2094, Glu2125 to Asp2151, Arg2253 to Val2287, Asn2401 to Glu2435, Pro2483 to Pro2505, Ile2537 to Val2606, Ser2975 to Ser3003, and Thr3228 to Gly3254. Basic and acidic residues-rich tracts occupy residues Pro1336–Val1345, Lys1782–Ile1802, and Leu2017–His2037. Polar residues predominate over residues Gly2038–Met2087. The segment covering Asp2130–Asp2151 has biased composition (acidic residues). Residues Arg2253 to Ser2265 are compositionally biased toward basic and acidic residues. A compositionally biased stretch (polar residues) spans Arg2277–Val2287. Residue Ser2598 is modified to Phosphoserine. The span at Glu2982 to Glu3002 shows a compositional bias: basic and acidic residues. Over residues Ala3237–Asp3247 the composition is skewed to polar residues. Residues Ser3340–Ala3681 enclose the HECT domain. Catalysis depends on Cys3648, which acts as the Glycyl thioester intermediate.

The protein belongs to the UPL family. TOM1/PTR1 subfamily. In terms of tissue distribution, widely expressed. Expressed in root, stem, cauline and rosette leaf, seedling and flower (at protein level).

It carries out the reaction S-ubiquitinyl-[E2 ubiquitin-conjugating enzyme]-L-cysteine + [acceptor protein]-L-lysine = [E2 ubiquitin-conjugating enzyme]-L-cysteine + N(6)-ubiquitinyl-[acceptor protein]-L-lysine.. It functions in the pathway protein modification; protein ubiquitination. In terms of biological role, probable E3 ubiquitin-protein ligase which mediates ubiquitination and subsequent proteasomal degradation of target proteins. The chain is E3 ubiquitin-protein ligase UPL1 (UPL1) from Arabidopsis thaliana (Mouse-ear cress).